Reading from the N-terminus, the 161-residue chain is Protein-export protein SecB (161 aa).

It belongs to the SecB family. In terms of assembly, homotetramer, a dimer of dimers. One homotetramer interacts with 1 SecA dimer.

The protein localises to the cytoplasm. Functionally, one of the proteins required for the normal export of preproteins out of the cell cytoplasm. It is a molecular chaperone that binds to a subset of precursor proteins, maintaining them in a translocation-competent state. It also specifically binds to its receptor SecA. The protein is Protein-export protein SecB of Shewanella baltica (strain OS223).